A 193-amino-acid chain; its full sequence is Potassium-transporting ATPase KdpC subunit (193 aa).

Residues 7 to 27 form a helical membrane-spanning segment; it reads PMIVIFAVLAALTGLAYPAVM.

This sequence belongs to the KdpC family. In terms of assembly, the system is composed of three essential subunits: KdpA, KdpB and KdpC.

The protein resides in the cell inner membrane. Part of the high-affinity ATP-driven potassium transport (or Kdp) system, which catalyzes the hydrolysis of ATP coupled with the electrogenic transport of potassium into the cytoplasm. This subunit acts as a catalytic chaperone that increases the ATP-binding affinity of the ATP-hydrolyzing subunit KdpB by the formation of a transient KdpB/KdpC/ATP ternary complex. The protein is Potassium-transporting ATPase KdpC subunit of Paraburkholderia phymatum (strain DSM 17167 / CIP 108236 / LMG 21445 / STM815) (Burkholderia phymatum).